The sequence spans 122 residues: UPF0102 protein XCV0816 (122 aa).

It belongs to the UPF0102 family.

The protein is UPF0102 protein XCV0816 of Xanthomonas euvesicatoria pv. vesicatoria (strain 85-10) (Xanthomonas campestris pv. vesicatoria).